A 387-amino-acid chain; its full sequence is UPF0400 protein C337.03 (387 aa).

The CID domain maps to 1 to 133; sequence MALTPDTVSS…SLQERFNNAE (133 aa). Positions 177-255 form a coiled coil; sequence KSYLEKQSDY…IISNLENKES (79 aa). Positions 257–387 are disordered; that stretch reads TATSTLTDAG…SSAAGLYGDS (131 aa). A compositionally biased stretch (low complexity) spans 283–297; the sequence is SPPSSSPNSDDAYSP. Residues 298-323 are compositionally biased toward polar residues; it reads QVDSYSPSINSVPYTSNIVENPSEDN. The span at 353 to 365 shows a compositional bias: acidic residues; sequence NEEESKELPEDSD. Positions 370–379 are enriched in low complexity; sequence DSSPSSDDSS. Ser-372 carries the phosphoserine modification.

It belongs to the UPF0400 (RTT103) family.

The protein is UPF0400 protein C337.03 of Schizosaccharomyces pombe (strain 972 / ATCC 24843) (Fission yeast).